Here is a 137-residue protein sequence, read N- to C-terminus: Putative pre-16S rRNA nuclease (137 aa).

It belongs to the YqgF nuclease family.

It localises to the cytoplasm. In terms of biological role, could be a nuclease involved in processing of the 5'-end of pre-16S rRNA. The chain is Putative pre-16S rRNA nuclease from Mycoplasmopsis synoviae (strain 53) (Mycoplasma synoviae).